A 90-amino-acid polypeptide reads, in one-letter code: Putative toxin RelE1 (90 aa).

The protein belongs to the RelE toxin family.

In terms of biological role, toxic component of a type II toxin-antitoxin (TA) system. Its cognate antitoxin is RelB1 (Potential). In Methanocaldococcus jannaschii (strain ATCC 43067 / DSM 2661 / JAL-1 / JCM 10045 / NBRC 100440) (Methanococcus jannaschii), this protein is Putative toxin RelE1 (relE1).